The primary structure comprises 298 residues: Adaptation to cold protein C (298 aa).

As to quaternary structure, interacts with the C-terminal extension of AtcJ. Also interacts with AtcB, but not with AtcA.

Its activity is regulated as follows. Interaction with AtcJ stabilizes AtcC. Involved in cold adaptation. This Shewanella oneidensis (strain ATCC 700550 / JCM 31522 / CIP 106686 / LMG 19005 / NCIMB 14063 / MR-1) protein is Adaptation to cold protein C.